We begin with the raw amino-acid sequence, 282 residues long: Pantothenate synthetase (282 aa).

30–37 (MGGLHQGH) is an ATP binding site. The active-site Proton donor is H37. A (R)-pantoate-binding site is contributed by Q61. Beta-alanine is bound at residue Q61. Position 146 to 149 (146 to 149 (GQKD)) interacts with ATP. A (R)-pantoate-binding site is contributed by Q152. Residues I175 and 183–186 (MSTR) each bind ATP.

Belongs to the pantothenate synthetase family. In terms of assembly, homodimer.

Its subcellular location is the cytoplasm. It carries out the reaction (R)-pantoate + beta-alanine + ATP = (R)-pantothenate + AMP + diphosphate + H(+). The protein operates within cofactor biosynthesis; (R)-pantothenate biosynthesis; (R)-pantothenate from (R)-pantoate and beta-alanine: step 1/1. In terms of biological role, catalyzes the condensation of pantoate with beta-alanine in an ATP-dependent reaction via a pantoyl-adenylate intermediate. The polypeptide is Pantothenate synthetase (Vesicomyosocius okutanii subsp. Calyptogena okutanii (strain HA)).